Reading from the N-terminus, the 750-residue chain is Amyloid-beta A4 precursor protein-binding family A member 2 (750 aa).

2 disordered regions span residues methionine 1 to glutamate 94 and aspartate 143 to threonine 346. Phosphoserine is present on serine 11. The segment covering glycine 70–threonine 80 has biased composition (polar residues). The segment covering serine 81–glutamate 94 has biased composition (acidic residues). The tract at residues histidine 185–threonine 271 is STXBP1-binding. Serine 209 carries the phosphoserine modification. A compositionally biased stretch (acidic residues) spans aspartate 219 to aspartate 228. Composition is skewed to polar residues over residues leucine 238–glutamate 248 and serine 332–proline 344. The region spanning leucine 367–aspartate 556 is the PID domain. PDZ domains are found at residues glutamate 569–serine 654 and threonine 660–alanine 736.

As to quaternary structure, part of a multimeric complex containing STXBP1 and syntaxin-1. Binds to the cytoplasmic domain of amyloid-beta protein, and to the nuclear factor NF-kappa-B/p65 via its PDZ domain. Interacts with the N-terminal domain of NECAB3. As to expression, specifically expressed in neurons, predominantly of the cerebellum, hippocampus, and spinal cord. Lesser extent in neurons of the cerebral cortex and anterior thalmic nuclei.

Functionally, putative function in synaptic vesicle exocytosis by binding to STXBP1, an essential component of the synaptic vesicle exocytotic machinery. May modulate processing of the amyloid-beta precursor protein (APP) and hence formation of APP-beta. This chain is Amyloid-beta A4 precursor protein-binding family A member 2 (Apba2), found in Mus musculus (Mouse).